The primary structure comprises 251 residues: uncharacterized protein (251 aa).

This is an uncharacterized protein from Caenorhabditis elegans.